Reading from the N-terminus, the 929-residue chain is Dual specificity protein phosphatase PHS1 (929 aa).

2 disordered regions span residues Met1 to Asp27 and Pro545 to Ser618. Basic and acidic residues-rich tracts occupy residues His552–Met580 and Glu591–His606. The 146-residue stretch at Lys703 to Gly848 folds into the Tyrosine-protein phosphatase domain. Cys792 (phosphocysteine intermediate) is an active-site residue. Cys792–Arg798 provides a ligand contact to substrate. A Nuclear export signal motif is present at residues Gln903–Leu911.

Interacts with MPK18. In terms of tissue distribution, expressed in roots, leaves and flowers.

Its subcellular location is the cytoplasm. The catalysed reaction is O-phospho-L-seryl-[protein] + H2O = L-seryl-[protein] + phosphate. The enzyme catalyses O-phospho-L-threonyl-[protein] + H2O = L-threonyl-[protein] + phosphate. It carries out the reaction O-phospho-L-tyrosyl-[protein] + H2O = L-tyrosyl-[protein] + phosphate. Probable dual specificity phosphatase that binds and dephosphorylates MPK18, modulating the organization and dynamics of cortical microtubules. Acts as a negative regulator of abscisic acid (ABA) signaling during seed germination and light-induced stomata aperture. The sequence is that of Dual specificity protein phosphatase PHS1 (PHS1) from Arabidopsis thaliana (Mouse-ear cress).